A 285-amino-acid polypeptide reads, in one-letter code: Putative alkaline ceramidase dcd3B (285 aa).

3 consecutive transmembrane segments (helical) span residues 34-54 (TFSS…MMSA), 77-97 (VLFS…YHAT), and 104-124 (LFDE…ILTI). Asn131 carries an N-linked (GlcNAc...) asparagine glycan. Transmembrane regions (helical) follow at residues 141-161 (RFLP…ITII), 166-186 (IILQ…SYMY), 200-220 (PKKF…SWLT), and 236-256 (LHAV…QFFI).

This sequence belongs to the alkaline ceramidase family.

The protein resides in the membrane. In Dictyostelium discoideum (Social amoeba), this protein is Putative alkaline ceramidase dcd3B (dcd3B).